We begin with the raw amino-acid sequence, 216 residues long: Phosphorylated carbohydrates phosphatase TM_1254 (216 aa).

The Nucleophile role is filled by Asp-7.

It belongs to the HAD-like hydrolase superfamily. Co(2+) serves as cofactor. The cofactor is Mg(2+). Mn(2+) is required as a cofactor. It depends on Ni(2+) as a cofactor.

Functionally, displays high phosphatase activity toward erythrose 4-phosphate, fructose 6-phosphate, 2-deoxyglucose 6-phosphate, and mannose 6-phosphate. May have a role in the intracellular metabolism of many phosphorylated carbohydrates. In Thermotoga maritima (strain ATCC 43589 / DSM 3109 / JCM 10099 / NBRC 100826 / MSB8), this protein is Phosphorylated carbohydrates phosphatase TM_1254.